The primary structure comprises 127 residues: Small ribosomal subunit protein uS11 (127 aa).

This sequence belongs to the universal ribosomal protein uS11 family. In terms of assembly, part of the 30S ribosomal subunit. Interacts with proteins S7 and S18. Binds to IF-3.

Functionally, located on the platform of the 30S subunit, it bridges several disparate RNA helices of the 16S rRNA. Forms part of the Shine-Dalgarno cleft in the 70S ribosome. This is Small ribosomal subunit protein uS11 from Chlorobium phaeobacteroides (strain DSM 266 / SMG 266 / 2430).